The primary structure comprises 189 residues: Apolipoprotein D (189 aa).

The first 21 residues, 1-21 (MAPTLLLLLPALAGLISVAQG), serve as a signal peptide directing secretion. A Pyrrolidone carboxylic acid modification is found at Q22. Disulfide bonds link C29-C135 and C62-C186. 2 N-linked (GlcNAc...) asparagine glycosylation sites follow: N66 and N99.

This sequence belongs to the calycin superfamily. Lipocalin family. In terms of assembly, homodimer. Most heavily expressed in adrenal gland, lung, brain, testis and spleen.

It localises to the secreted. In terms of biological role, APOD occurs in the macromolecular complex with lecithin-transport and binding of bilin. Appears to be able to transport a variety of ligands in a number of different contexts. This chain is Apolipoprotein D (APOD), found in Oryctolagus cuniculus (Rabbit).